The following is a 390-amino-acid chain: MEMTEASKQTTAEGSANPEPDQILSPRRSLELKQKKWWISVSLCIFLVLLGDSLVMLLLNFFYVQDNREDSDQDLQYRGTWLQALVQNAAFPLLIPLFFIFPSPKQNQETTNTRFLSFRLILLYISLGVLVAAHSKLFALGKLYANFGVFTLISATQLIFTAIFAAIINRFKFTRWIILSIIGSILIYVFGSPEFGGEPDENEEFYSIQAWLTFAASVAFALSLCLFQLCFEKVLVKTKRYGNKKVFRMVIEMQICVSFVATVVCLVGLFASGENKELQGDSHRFKKGETYYVLSLIGLALSWQVWAVGLMGLVLYVSGVFGDVVHMCTSPLVALFVVLAFDFMDDEFSWPRIGTLIATVVALGSYFYTLHKRNKKKMVELYQTENNIDV.

The segment covering 1 to 14 (MEMTEASKQTTAEG) has biased composition (polar residues). Residues 1–23 (MEMTEASKQTTAEGSANPEPDQI) form a disordered region. A Phosphoserine modification is found at Ser25. The next 10 helical transmembrane spans lie at 39 to 59 (ISVSLCIFLVLLGDSLVMLLL), 81 to 101 (WLQALVQNAAFPLLIPLFFIF), 120 to 140 (LILLYISLGVLVAAHSKLFAL), 148 to 168 (GVFTLISATQLIFTAIFAAII), 176 to 196 (WIILSIIGSILIYVFGSPEFG), 211 to 231 (WLTFAASVAFALSLCLFQLCF), 250 to 270 (VIEMQICVSFVATVVCLVGLF), 297 to 317 (IGLALSWQVWAVGLMGLVLYV), 324 to 344 (VVHMCTSPLVALFVVLAFDFM), and 348 to 368 (FSWPRIGTLIATVVALGSYFY).

This sequence belongs to the purine permeases (TC 2.A.7.14) family.

The protein localises to the membrane. This is Probable purine permease 18 (PUP18) from Arabidopsis thaliana (Mouse-ear cress).